Here is a 388-residue protein sequence, read N- to C-terminus: Succinate--CoA ligase [ADP-forming] subunit beta (388 aa).

Residues 9-244 (KQLFAEYGLP…PSQDDAREAH (236 aa)) enclose the ATP-grasp domain. ATP is bound by residues K46, 53-55 (GRG), E99, T102, and E107. Mg(2+)-binding residues include N199 and D213. Residues N264 and 321 to 323 (GIV) each bind substrate.

The protein belongs to the succinate/malate CoA ligase beta subunit family. In terms of assembly, heterotetramer of two alpha and two beta subunits. It depends on Mg(2+) as a cofactor.

The catalysed reaction is succinate + ATP + CoA = succinyl-CoA + ADP + phosphate. It carries out the reaction GTP + succinate + CoA = succinyl-CoA + GDP + phosphate. It functions in the pathway carbohydrate metabolism; tricarboxylic acid cycle; succinate from succinyl-CoA (ligase route): step 1/1. Succinyl-CoA synthetase functions in the citric acid cycle (TCA), coupling the hydrolysis of succinyl-CoA to the synthesis of either ATP or GTP and thus represents the only step of substrate-level phosphorylation in the TCA. The beta subunit provides nucleotide specificity of the enzyme and binds the substrate succinate, while the binding sites for coenzyme A and phosphate are found in the alpha subunit. The chain is Succinate--CoA ligase [ADP-forming] subunit beta from Pseudomonas paraeruginosa (strain DSM 24068 / PA7) (Pseudomonas aeruginosa (strain PA7)).